We begin with the raw amino-acid sequence, 408 residues long: Exodeoxyribonuclease 7 large subunit (408 aa).

Belongs to the XseA family. Heterooligomer composed of large and small subunits.

Its subcellular location is the cytoplasm. The catalysed reaction is Exonucleolytic cleavage in either 5'- to 3'- or 3'- to 5'-direction to yield nucleoside 5'-phosphates.. In terms of biological role, bidirectionally degrades single-stranded DNA into large acid-insoluble oligonucleotides, which are then degraded further into small acid-soluble oligonucleotides. The chain is Exodeoxyribonuclease 7 large subunit from Alkaliphilus oremlandii (strain OhILAs) (Clostridium oremlandii (strain OhILAs)).